A 156-amino-acid polypeptide reads, in one-letter code: Lipoprotein signal peptidase (156 aa).

Residues 62-82 (GNTVFMVLSAVIIAILSYTKI) form a helical membrane-spanning segment. Active-site residues include aspartate 115 and aspartate 133. A helical transmembrane segment spans residues 126-146 (WPAFNLADLTITCGVIVFLAM).

It belongs to the peptidase A8 family.

Its subcellular location is the cell inner membrane. The catalysed reaction is Release of signal peptides from bacterial membrane prolipoproteins. Hydrolyzes -Xaa-Yaa-Zaa-|-(S,diacylglyceryl)Cys-, in which Xaa is hydrophobic (preferably Leu), and Yaa (Ala or Ser) and Zaa (Gly or Ala) have small, neutral side chains.. Its pathway is protein modification; lipoprotein biosynthesis (signal peptide cleavage). Its function is as follows. This protein specifically catalyzes the removal of signal peptides from prolipoproteins. This chain is Lipoprotein signal peptidase, found in Anaplasma phagocytophilum (strain HZ).